The primary structure comprises 157 residues: MRIGHGYDVHRFAEGDFITLGGVRIAHHFGLLAHSDGDVLLHALSDALLGAAALGDIGKHFPDTDPQFKGADSRVLLRHVVALIHAKGWKIGNVDNTIVAQAPKMAPHIETMRALIAEDLQVELDQVNVKATTTEKLGFVGREEGIAVHSVALLQRP.

A divalent metal cation-binding residues include D8 and H10. 4-CDP-2-C-methyl-D-erythritol 2-phosphate is bound by residues 8-10 and 34-35; these read DVH and HS. Residue H42 coordinates a divalent metal cation. Residues 56–58, 61–65, 100–106, 132–135, F139, and R142 each bind 4-CDP-2-C-methyl-D-erythritol 2-phosphate; these read DIG, FPDTD, AQAPKMA, and TTTE.

This sequence belongs to the IspF family. In terms of assembly, homotrimer. The cofactor is a divalent metal cation.

It carries out the reaction 4-CDP-2-C-methyl-D-erythritol 2-phosphate = 2-C-methyl-D-erythritol 2,4-cyclic diphosphate + CMP. The protein operates within isoprenoid biosynthesis; isopentenyl diphosphate biosynthesis via DXP pathway; isopentenyl diphosphate from 1-deoxy-D-xylulose 5-phosphate: step 4/6. Its function is as follows. Involved in the biosynthesis of isopentenyl diphosphate (IPP) and dimethylallyl diphosphate (DMAPP), two major building blocks of isoprenoid compounds. Catalyzes the conversion of 4-diphosphocytidyl-2-C-methyl-D-erythritol 2-phosphate (CDP-ME2P) to 2-C-methyl-D-erythritol 2,4-cyclodiphosphate (ME-CPP) with a corresponding release of cytidine 5-monophosphate (CMP). This chain is 2-C-methyl-D-erythritol 2,4-cyclodiphosphate synthase, found in Pseudomonas fluorescens (strain ATCC BAA-477 / NRRL B-23932 / Pf-5).